We begin with the raw amino-acid sequence, 149 residues long: MAKKITGYVKLQVPAGAANPSPPIGPALGQRGLNIMEFCKAFNAKTAQMEKGTPIPVIITAYQDRSFTFEMKQPPVTFFLKKAVGLKIGKKPASGSKTPGKGPTVGKITEAQLREIAEKKMPDLNCDSVDAAVAMIRGSARAMGLEVVA.

Belongs to the universal ribosomal protein uL11 family. In terms of assembly, part of the ribosomal stalk of the 50S ribosomal subunit. Interacts with L10 and the large rRNA to form the base of the stalk. L10 forms an elongated spine to which L12 dimers bind in a sequential fashion forming a multimeric L10(L12)X complex. Post-translationally, one or more lysine residues are methylated.

In terms of biological role, forms part of the ribosomal stalk which helps the ribosome interact with GTP-bound translation factors. The polypeptide is Large ribosomal subunit protein uL11 (Methylorubrum extorquens (strain CM4 / NCIMB 13688) (Methylobacterium extorquens)).